The primary structure comprises 271 residues: Phosphate import ATP-binding protein PstB (271 aa).

The region spanning 24-266 (MIGNDVSVYY…PDDQRTQDYI (243 aa)) is the ABC transporter domain. 56 to 63 (GPSGCGKS) is an ATP binding site.

This sequence belongs to the ABC transporter superfamily. Phosphate importer (TC 3.A.1.7) family. The complex is composed of two ATP-binding proteins (PstB), two transmembrane proteins (PstC and PstA) and a solute-binding protein (PstS).

The protein resides in the cell inner membrane. The catalysed reaction is phosphate(out) + ATP + H2O = ADP + 2 phosphate(in) + H(+). In terms of biological role, part of the ABC transporter complex PstSACB involved in phosphate import. Responsible for energy coupling to the transport system. This chain is Phosphate import ATP-binding protein PstB, found in Rhizobium meliloti (strain 1021) (Ensifer meliloti).